The following is a 114-amino-acid chain: Amphinase-1 (114 aa).

Catalysis depends on His15, which acts as the Proton acceptor. 4 disulfides stabilise this stretch: Cys26/Cys79, Cys41/Cys85, Cys59/Cys100, and Cys97/Cys114. N-linked (GlcNAc...) asparagine glycosylation occurs at Asn27. 42–46 (KPVNT) is a substrate binding site. Asn67 and Asn91 each carry an N-linked (GlcNAc...) asparagine glycan. The Proton donor role is filled by His107.

It belongs to the pancreatic ribonuclease family. Monomer. Post-translationally, there are at least five different forms arising from glycan heterogeneity.

Its subcellular location is the secreted. In terms of biological role, endonuclease, hydrolyzes highly polymerized RNA, poly(U) and poly(C), and the dinucleotides CpA and UpA. More active towards rCA than rUA or rUG. Has cytotoxic activity against cultured human submaxillary gland carcinoma cells. This is Amphinase-1 from Lithobates pipiens (Northern leopard frog).